Here is an 855-residue protein sequence, read N- to C-terminus: Cytosolic phospholipase A2 zeta (855 aa).

The 119-residue stretch at 27 to 145 (EKSEPQWKHR…QLGQPCTKNF (119 aa)) folds into the C2 domain. D60, D66, D116, D118, and D123 together coordinate Ca(2+). Residues 304–855 (MSSSGDLDLR…RRQAGGRVGG (552 aa)) form the PLA2c domain. The Nucleophile role is filled by S393. Residue D685 is the Proton acceptor of the active site.

Ca(2+) serves as cofactor. As to expression, strongly expressed in thyroid, expressed at intermediate level in stomach and at very low level in large intestine and prostate.

Its subcellular location is the cytoplasm. It localises to the cytosol. The protein localises to the cell membrane. The protein resides in the mitochondrion. It carries out the reaction a 1,2-diacyl-sn-glycero-3-phosphocholine + H2O = a 1-acyl-sn-glycero-3-phosphocholine + a fatty acid + H(+). The catalysed reaction is a 1-O-alkyl-2-acyl-sn-glycero-3-phosphocholine + H2O = a 1-O-alkyl-sn-glycero-3-phosphocholine + a fatty acid + H(+). It catalyses the reaction 1-hexadecanoyl-2-(9Z-octadecenoyl)-sn-glycero-3-phosphocholine + H2O = 2-(9Z-octadecenoyl)-sn-glycero-3-phosphocholine + hexadecanoate + H(+). The enzyme catalyses 1-hexadecanoyl-2-(9Z,12Z-octadecadienoyl)-sn-glycero-3-phosphocholine + H2O = (9Z,12Z)-octadecadienoate + 1-hexadecanoyl-sn-glycero-3-phosphocholine + H(+). It carries out the reaction 1-hexadecanoyl-2-(5Z,8Z,11Z,14Z-eicosatetraenoyl)-sn-glycero-3-phosphocholine + H2O = 1-hexadecanoyl-sn-glycero-3-phosphocholine + (5Z,8Z,11Z,14Z)-eicosatetraenoate + H(+). The catalysed reaction is 1-hexadecanoyl-2-(9Z,12Z-octadecadienoyl)-sn-glycero-3-phosphoethanolamine + H2O = 1-hexadecanoyl-sn-glycero-3-phosphoethanolamine + (9Z,12Z)-octadecadienoate + H(+). It catalyses the reaction 1-hexadecanoyl-2-(5Z,8Z,11Z,14Z-eicosatetraenoyl)-sn-glycero-3-phosphoethanolamine + H2O = 1-hexadecanoyl-sn-glycero-3-phosphoethanolamine + (5Z,8Z,11Z,14Z)-eicosatetraenoate + H(+). The enzyme catalyses 1-(5Z,8Z,11Z,14Z-eicosatetraenoyl)-2-O-hexadecyl-sn-glycero-3-phosphocholine + H2O = 2-O-hexadecyl-sn-glycero-3-phosphocholine + (5Z,8Z,11Z,14Z)-eicosatetraenoate + H(+). It carries out the reaction 1-O-hexadecyl-2-(5Z,8Z,11Z,14Z)-eicosatetraenoyl-sn-glycero-3-phosphocholine + H2O = 1-O-hexadecyl-sn-glycero-3-phosphocholine + (5Z,8Z,11Z,14Z)-eicosatetraenoate + H(+). The catalysed reaction is 1-hexadecanoyl-sn-glycero-3-phosphocholine + H2O = sn-glycerol 3-phosphocholine + hexadecanoate + H(+). Stimulated by cytosolic Ca(2+). Functionally, has calcium-dependent phospholipase and lysophospholipase activities with a potential role in membrane lipid remodeling and biosynthesis of lipid mediators. Preferentially hydrolyzes the ester bond of the fatty acyl group attached at sn-2 position of phospholipids (phospholipase A2 activity). Selectively hydrolyzes sn-2 arachidonoyl group from membrane phospholipids, providing the precursor for eicosanoid biosynthesis. In myocardial mitochondria, plays a major role in arachidonate release that is metabolically channeled to the formation of cardioprotective eicosanoids, epoxyeicosatrienoates (EETs). The chain is Cytosolic phospholipase A2 zeta (Pla2g4f) from Mus musculus (Mouse).